A 1271-amino-acid chain; its full sequence is Probable WRKY transcription factor protein 1 (1271 aa).

Polar residues predominate over residues 1–12 (MGAQYSTELNKY). Disordered regions lie at residues 1–138 (MGAQ…NSDR), 204–312 (NNNN…QQNG), and 370–515 (NNNN…RTNS). Positions 9-71 (LNKYNNNNNN…NNNNNNNNNN (63 aa)) form a coiled coil. 4 stretches are compositionally biased toward low complexity: residues 13-103 (NNNN…NNNN), 116-135 (INNTNKDTNIPNNSNSNNNN), 204-216 (NNNNNNNNNNENN), and 223-259 (SSTTTTTTTTTTTNNNSNNNNNNNNNNNNNNNNNNNN). Positions 260 to 274 (NEDDEDDYGDDDTIE) are enriched in acidic residues. A compositionally biased stretch (polar residues) spans 297–312 (SNLNDTNGGNSPQQNG). A coiled-coil region spans residues 320–372 (KKLLALQQKQLEQEQEQKQQQKQQQQQQQQQQQQQQQQQQQQQKDAIENINNN). Residues 370-388 (NNNNNNKLQPIVKNSVNKT) are compositionally biased toward low complexity. Residues 413 to 442 (NEDEYDASDEYIDDDDDDDEKYDDDDDEYF) are compositionally biased toward acidic residues. Over residues 443–458 (EGNNNNNYKKNNISNK) the composition is skewed to low complexity. Residues 475–487 (EIFKQKKLNHDKN) are compositionally biased toward basic and acidic residues. The span at 488–515 (QSNPKQQLTSHSEFDNSLLNKNQSRTNS) shows a compositional bias: polar residues. The stretch at 520–574 (LQIKEENYHQIQQEHGEKQQQQQQQQQQPQQQQQQQQQQQQQQQQEMQVDKEQTE) forms a coiled coil. Positions 578 to 587 (NTNKKEEQKP) are enriched in basic and acidic residues. Disordered regions lie at residues 578–650 (NTNK…EGFL) and 667–811 (SKKS…NISN). A compositionally biased stretch (low complexity) spans 610–642 (NNENNNNNNNNNNNNNNNNNNNNNNNNNNYRNN). Polar residues predominate over residues 672–702 (NVVPTSPKSNLSDQQPPFSPVQISPQKQSPA). Composition is skewed to low complexity over residues 703–715 (TTTTTTTTTTPTP), 725–766 (NNNI…NNIN), and 774–811 (NSTQNNNNNNNNNNNSPQNSNTNSNNSNNSNNSNNISN). Residues 766–786 (NNEEDEENNSTQNNNNNNNNN) adopt a coiled-coil conformation. Positions 808 to 872 (NISNIVSDGY…YKGEHCHGFP (65 aa)) form a DNA-binding region, WRKY 1. Zn(2+) contacts are provided by C839, C844, H867, and H869. Positions 890 to 1095 (FEGLDGNNNN…RFNGTSESKG (206 aa)) are disordered. Residues 895 to 918 (GNNNNNNNNNNNNNNYSSNSNSNG) are compositionally biased toward low complexity. The span at 919–937 (NGNGNGNGNGNGNGNGNGN) shows a compositional bias: gly residues. The span at 938–956 (SNGNQDQNGNSFNDQNGDS) shows a compositional bias: low complexity. Positions 957–966 (PTQHGQISPM) are enriched in polar residues. Positions 967 to 995 (NSPKNTIPTTTTTTTSISTYVNTNSTNKK) are enriched in low complexity. Positions 998–1010 (SKQEKKISVKNET) are enriched in basic and acidic residues. Acidic residues predominate over residues 1011–1021 (TDDDEFQEDID). A coiled-coil region spans residues 1013 to 1040 (DDEFQEDIDQLSNNNNNNNNNNNNNNNN). A compositionally biased stretch (low complexity) spans 1025 to 1085 (NNNNNNNNNN…NNNNNNNNNN (61 aa)). Positions 1105–1167 (SSIDHLDDGF…YRGKHNHDPP (63 aa)) form a DNA-binding region, WRKY 2. Zn(2+) contacts are provided by C1136, C1141, H1162, and H1164. Positions 1180-1210 (NGLYNNNNNNNNNNNNNNNNNNNNNNINNIN) are disordered. Low complexity predominate over residues 1184-1210 (NNNNNNNNNNNNNNNNNNNNNNINNIN).

This sequence belongs to the WRKY group I family.

It is found in the nucleus. Probable transcription factor. Interacts specifically with the W box (5'-(T)TGAC[CT]-3'), a frequently occurring elicitor-responsive cis-acting element. In Dictyostelium discoideum (Social amoeba), this protein is Probable WRKY transcription factor protein 1 (wrky1).